Consider the following 439-residue polypeptide: Proton pump-interactor 4 (439 aa).

Positions Lys286–Ser354 form a coiled coil. Residues Leu415 to Phe435 form a helical membrane-spanning segment.

Belongs to the plant Proton pump-interactor protein family.

The protein localises to the cell membrane. It is found in the endoplasmic reticulum membrane. Its function is as follows. May regulate plasma membrane ATPase activity. This chain is Proton pump-interactor 4 (PPI4), found in Arabidopsis thaliana (Mouse-ear cress).